Consider the following 418-residue polypeptide: Serine hydroxymethyltransferase (418 aa).

(6S)-5,6,7,8-tetrahydrofolate-binding positions include Leu121 and 125–127; that span reads GHL. Lys230 is subject to N6-(pyridoxal phosphate)lysine. (6S)-5,6,7,8-tetrahydrofolate-binding positions include Glu246 and 355 to 357; that span reads SPF.

This sequence belongs to the SHMT family. In terms of assembly, homodimer. Requires pyridoxal 5'-phosphate as cofactor.

Its subcellular location is the cytoplasm. It carries out the reaction (6R)-5,10-methylene-5,6,7,8-tetrahydrofolate + glycine + H2O = (6S)-5,6,7,8-tetrahydrofolate + L-serine. It participates in one-carbon metabolism; tetrahydrofolate interconversion. Its pathway is amino-acid biosynthesis; glycine biosynthesis; glycine from L-serine: step 1/1. Functionally, catalyzes the reversible interconversion of serine and glycine with tetrahydrofolate (THF) serving as the one-carbon carrier. This reaction serves as the major source of one-carbon groups required for the biosynthesis of purines, thymidylate, methionine, and other important biomolecules. Also exhibits THF-independent aldolase activity toward beta-hydroxyamino acids, producing glycine and aldehydes, via a retro-aldol mechanism. The chain is Serine hydroxymethyltransferase from Streptococcus pneumoniae (strain 70585).